The primary structure comprises 470 residues: Cysteine--tRNA ligase (470 aa).

Cysteine 28 serves as a coordination point for Zn(2+). Positions 30 to 40 (PTVYNYIHIGN) match the 'HIGH' region motif. Zn(2+) is bound by residues cysteine 212, histidine 237, and glutamate 241. Residues 271 to 275 (KMSKS) carry the 'KMSKS' region motif. Position 274 (lysine 274) interacts with ATP.

Belongs to the class-I aminoacyl-tRNA synthetase family. In terms of assembly, monomer. Zn(2+) serves as cofactor.

The protein localises to the cytoplasm. The enzyme catalyses tRNA(Cys) + L-cysteine + ATP = L-cysteinyl-tRNA(Cys) + AMP + diphosphate. The chain is Cysteine--tRNA ligase from Pediococcus pentosaceus (strain ATCC 25745 / CCUG 21536 / LMG 10740 / 183-1w).